Here is a 448-residue protein sequence, read N- to C-terminus: MGKYFGTDGVRGVANKELTPELAFKIGRFGGYVLTKDTDRPKVIIGRDTRVSGHMLEGALVAGLLSTGAEVMRLGVISTPGVAYLTKALDAQAGVMISASHNPVQDNGIKFFGSDGFKLTDEQEAEIEALLDKEVDELPRPTGTNLGQVSDYFEGGQKYLQYIKQTVEEDFSGLHIALDCAHGATSSLAPYLFADLEADISTMGTSPNGMNINEGVGSTHPEVLAELVKEKGADIGLAFDGDGDRLIAVDEKGNIVDGDQIMFICAKYMKETGQLKHNTVVSTVMSNLGFYKALEANNITSDKTAVGDRYVMEEMKRGGYNLGGEQSGHIILLDYITTGDGMLSALQLVNIMKMTKKPLSELAGEMTKFPQLLVNVRVTDKKLALENEKIKEIIRVVEEEMNGDGRILVRPSGTEPLIRVMAEAPTQEVCDAFVHRIVEVVKAEVGAE.

Residue serine 100 is the Phosphoserine intermediate of the active site. 4 residues coordinate Mg(2+): serine 100, aspartate 240, aspartate 242, and aspartate 244. At serine 100 the chain carries Phosphoserine.

Belongs to the phosphohexose mutase family. It depends on Mg(2+) as a cofactor. Activated by phosphorylation.

It catalyses the reaction alpha-D-glucosamine 1-phosphate = D-glucosamine 6-phosphate. Functionally, catalyzes the conversion of glucosamine-6-phosphate to glucosamine-1-phosphate. The sequence is that of Phosphoglucosamine mutase from Bacillus cereus (strain G9842).